The chain runs to 536 residues: CTP synthase (536 aa).

The interval 1-267 (MTKYIFVTGG…DQIVCDHLKL (267 aa)) is amidoligase domain. Ser13 contacts CTP. Residue Ser13 participates in UTP binding. 14–19 (SIGKGI) contacts ATP. Tyr54 is an L-glutamine binding site. Asp71 contributes to the ATP binding site. Positions 71 and 141 each coordinate Mg(2+). CTP-binding positions include 148-150 (DIE), 188-193 (KTKPTQ), and Lys224. UTP contacts are provided by residues 188–193 (KTKPTQ) and Lys224. The Glutamine amidotransferase type-1 domain occupies 292 to 535 (KIALVGKYVE…ITAAVENSQA (244 aa)). Gly354 lines the L-glutamine pocket. Catalysis depends on Cys381, which acts as the Nucleophile; for glutamine hydrolysis. Residues 382 to 385 (LGMQ), Glu405, and Arg463 contribute to the L-glutamine site. Catalysis depends on residues His508 and Glu510.

Belongs to the CTP synthase family. Homotetramer.

It catalyses the reaction UTP + L-glutamine + ATP + H2O = CTP + L-glutamate + ADP + phosphate + 2 H(+). The catalysed reaction is L-glutamine + H2O = L-glutamate + NH4(+). It carries out the reaction UTP + NH4(+) + ATP = CTP + ADP + phosphate + 2 H(+). It functions in the pathway pyrimidine metabolism; CTP biosynthesis via de novo pathway; CTP from UDP: step 2/2. Its activity is regulated as follows. Allosterically activated by GTP, when glutamine is the substrate; GTP has no effect on the reaction when ammonia is the substrate. The allosteric effector GTP functions by stabilizing the protein conformation that binds the tetrahedral intermediate(s) formed during glutamine hydrolysis. Inhibited by the product CTP, via allosteric rather than competitive inhibition. In terms of biological role, catalyzes the ATP-dependent amination of UTP to CTP with either L-glutamine or ammonia as the source of nitrogen. Regulates intracellular CTP levels through interactions with the four ribonucleotide triphosphates. This is CTP synthase from Streptococcus mutans serotype c (strain ATCC 700610 / UA159).